Reading from the N-terminus, the 250-residue chain is Ribosomal RNA small subunit methyltransferase J (250 aa).

Residues 96–97 and aspartate 168 contribute to the S-adenosyl-L-methionine site; that span reads RD.

It belongs to the methyltransferase superfamily. RsmJ family.

Its subcellular location is the cytoplasm. It catalyses the reaction guanosine(1516) in 16S rRNA + S-adenosyl-L-methionine = N(2)-methylguanosine(1516) in 16S rRNA + S-adenosyl-L-homocysteine + H(+). In terms of biological role, specifically methylates the guanosine in position 1516 of 16S rRNA. In Neisseria gonorrhoeae (strain ATCC 700825 / FA 1090), this protein is Ribosomal RNA small subunit methyltransferase J.